The chain runs to 1333 residues: Partitioning defective 3 homolog (1333 aa).

Serine 25 carries the phosphoserine modification. Residue threonine 91 is modified to Phosphothreonine. The tract at residues 143–262 (SSDPALTGLS…VGHADTGLEN (120 aa)) is disordered. Composition is skewed to polar residues over residues 150-163 (GLST…FSSE) and 171-187 (TRWS…TAGS). Phosphoserine occurs at positions 156 and 174. Positions 190-203 (TCDRKKDENYRSLP) are enriched in basic and acidic residues. Residues 207–224 (SSWSNQFQRDNARSSLSA) are compositionally biased toward polar residues. Residues 271–359 (MVKLVQVPND…ARVIWFHVVP (89 aa)) form the PDZ 1 domain. Disordered stretches follow at residues 369-388 (LSQR…DSHC) and 397-441 (NAPQ…APPS). Serine 383 carries the phosphoserine modification. PDZ domains are found at residues 461–546 (NIQL…LVFR) and 590–677 (EVPL…GMIQ). Tyrosine 489 bears the Phosphotyrosine mark. 6 positions are modified to phosphoserine: serine 692, serine 695, serine 715, serine 728, serine 806, and serine 824. 2 interaction with PRKCI and PRKCZ regions span residues 712-932 (RRIS…YDKP) and 712-936 (RRIS…MVDD). Lysine 831 is modified (N6-acetyllysine). Phosphoserine is present on serine 834. Lysine 848 carries the N6-acetyllysine modification. A phosphoserine mark is found at serine 849 and serine 869. 5 disordered regions span residues 861–884 (TVDD…KKSS), 928–1011 (SYDK…AKKG), 1024–1071 (KHRK…ERQA), 1110–1267 (PQSP…LGGH), and 1283–1333 (QEQR…PFYS). The residue at position 881 (lysine 881) is an N6-acetyllysine. The segment at 931-1333 (KPMVDDDDEG…TPEKGRPFYS (403 aa)) is interaction with FRMD4A. Over residues 935-949 (DDDDEGMETLEEDTE) the composition is skewed to acidic residues. Phosphoserine; by AURKA is present on serine 958. Serine 967 and serine 969 each carry phosphoserine. 2 stretches are compositionally biased toward basic and acidic residues: residues 977–1005 (DPEK…EKDK) and 1026–1039 (RKDD…RIKI). A Phosphoserine modification is found at serine 1042. The span at 1046–1071 (EEDRVRMKEEQERIQAKTREFRERQA) shows a compositional bias: basic and acidic residues. Residues 1046-1078 (EEDRVRMKEEQERIQAKTREFRERQARERDYAE) adopt a coiled-coil conformation. Residues 1134–1143 (PGDSNRSTPS) show a composition bias toward polar residues. The segment covering 1144–1171 (NHDRIQRLRQEFQQAKQDEDVEDRRRTY) has biased composition (basic and acidic residues). 3 coiled-coil regions span residues 1145 to 1168 (HDRI…EDRR), 1195 to 1218 (VQVQ…YSSL), and 1274 to 1295 (MLET…LKKQ). The segment covering 1176 to 1199 (SWSSSRPASQSGRHSVSVEVQVQR) has biased composition (low complexity). Polar residues predominate over residues 1215–1236 (YSSLPRQSRKNASSISQDSWEQ). The segment covering 1283-1292 (QEQRRKEQQL) has biased composition (basic and acidic residues). Positions 1314–1323 (SQVARLNRLQ) are enriched in polar residues. Residues 1324–1333 (TPEKGRPFYS) are compositionally biased toward basic and acidic residues. At lysine 1327 the chain carries N6-acetyllysine.

It belongs to the PAR3 family. In terms of assembly, interacts with PRCKI and CDH5. Interacts (via PDZ 3 domain) with PTEN (via C-terminus). Component of a complex whose core is composed of ARHGAP17, AMOT, PALS1, PATJ and PARD3/PAR3. Interacts with LIMK2, AURKA and AURKB. Component of the Par polarity complex, composed of at least phosphorylated PRKCZ, PARD3 and TIAM1. Interacts with ECT2 and FBF1. Interacts (via PDZ 1 domain) with F11R/JAM1, PARD6A and PARD6B. Part of a complex with PARD6A or PARD6B, PRKCI or PRKCZ and CDC42 or RAC1. Directly interacts with TIAM1 and TIAM2. Interacts with SIRT2. Interacts (via coiled-coil domain) with FRMD4A. Found in a complex with PARD3, CYTH1 and FRMD4A. Interacts with SAPCD2. Interacts with PRKCA. Interacts with PRKCZ. In terms of processing, acetylated. Deacetylated by SIRT2, thereby inhibiting Schwann cell peripheral myelination. Phosphorylation at Ser-824 by PRKCZ and PRKCI occurs at the most apical tip of epithelial cell-cell contacts during the initial phase of tight junction formation and may promote dissociation of the complex with PARD6. EGF-induced Tyr-1123 phosphorylation mediates dissociation from LIMK2. Phosphorylation by AURKA at Ser-958 is required for the normal establishment of neuronal polarity. Isoform 4 and isoform 5 are phosphorylated during oocyte maturation. As to expression, all isoforms are expressed in heart, while expression in brain is mainly limited to isoform 1, and to isoform 3 to a weaker level.

Its subcellular location is the cytoplasm. The protein resides in the endomembrane system. It is found in the cell junction. It localises to the tight junction. The protein localises to the adherens junction. Its subcellular location is the cell cortex. The protein resides in the cytoskeleton. It is found in the cell membrane. In terms of biological role, adapter protein involved in asymmetrical cell division and cell polarization processes. Seems to play a central role in the formation of epithelial tight junctions. Targets the phosphatase PTEN to cell junctions. Association with PARD6B may prevent the interaction of PARD3 with F11R/JAM1, thereby preventing tight junction assembly. The PARD6-PARD3 complex links GTP-bound Rho small GTPases to atypical protein kinase C proteins. Required for establishment of neuronal polarity and normal axon formation in cultured hippocampal neurons. Involved in Schwann cell peripheral myelination. This Mus musculus (Mouse) protein is Partitioning defective 3 homolog (Pard3).